The primary structure comprises 318 residues: 2,4-dinitroanisole O-demethylase subunit beta (318 aa).

The protein belongs to the metallo-beta-lactamase superfamily. In terms of assembly, part of the complex DnhAB composed of the 2,4-dinitroanisole O-demethylase alpha (DnhA) and beta (DnhB) subunits.

The catalysed reaction is 2,4-dinitroanisole + H2O = 2,4-dinitrophenol + methanol + H(+). In terms of biological role, involved in the degradation of 2,4-dinitroanisole (DNAN), an insensitive munition ingredient used in explosive formulations as a replacement for 2,4,6-trinitrotoluene (TNT). Catalyzes the removal of the methyl group from 2,4-dinitroanisole (DNAN) to yield 2,4-dinitrophenol (2,4-DNP) and methanol. This Nocardioides sp. (strain JS1661) protein is 2,4-dinitroanisole O-demethylase subunit beta.